Reading from the N-terminus, the 148-residue chain is Large ribosomal subunit protein bL9 (148 aa).

Belongs to the bacterial ribosomal protein bL9 family.

Its function is as follows. Binds to the 23S rRNA. This chain is Large ribosomal subunit protein bL9, found in Agathobacter rectalis (strain ATCC 33656 / DSM 3377 / JCM 17463 / KCTC 5835 / VPI 0990) (Eubacterium rectale).